Here is a 345-residue protein sequence, read N- to C-terminus: Arginine-hydroxylase NDUFAF5, mitochondrial (345 aa).

The N-terminal 36 residues, 1–36 (MLRPAGLWRLCRRPWAARVPAENLGRREVTSGVSPR), are a transit peptide targeting the mitochondrion.

This sequence belongs to the methyltransferase superfamily. In terms of assembly, interacts with NDUFAF8, leading to stabilize NDUFAF5. Interacts with NDUFS7. Interacts with PYURF (via TRM112 domain); the interaction is direct and stabilizes NDUFAF5 protein.

It is found in the mitochondrion inner membrane. Arginine hydroxylase that mediates hydroxylation of 'Arg-111' of NDUFS7 and is involved in the assembly of mitochondrial NADH:ubiquinone oxidoreductase complex (complex I, MT-ND1) at early stages. May also have methyltransferase activity. In Homo sapiens (Human), this protein is Arginine-hydroxylase NDUFAF5, mitochondrial.